The following is a 595-amino-acid chain: Elongation factor 4 2 (595 aa).

The tr-type G domain occupies 4 to 187 (SHIRNFAIIA…AIKQRLPAPQ (184 aa)). GTP contacts are provided by residues 16–21 (DHGKST) and 133–136 (NKVD).

The protein belongs to the TRAFAC class translation factor GTPase superfamily. Classic translation factor GTPase family. LepA subfamily.

The protein resides in the cell membrane. It carries out the reaction GTP + H2O = GDP + phosphate + H(+). Required for accurate and efficient protein synthesis under certain stress conditions. May act as a fidelity factor of the translation reaction, by catalyzing a one-codon backward translocation of tRNAs on improperly translocated ribosomes. Back-translocation proceeds from a post-translocation (POST) complex to a pre-translocation (PRE) complex, thus giving elongation factor G a second chance to translocate the tRNAs correctly. Binds to ribosomes in a GTP-dependent manner. This is Elongation factor 4 2 from Lactiplantibacillus plantarum (strain ATCC BAA-793 / NCIMB 8826 / WCFS1) (Lactobacillus plantarum).